The sequence spans 748 residues: Sulfhydryl oxidase 1 (748 aa).

An N-terminal signal peptide occupies residues 1 to 32; sequence MRRCGRLSGPPSLLLLLLLLSPLLFSGPGAYA. The Thioredoxin domain maps to 33–159; that stretch reads ARLSVLYSSS…RMRLIDALES (127 aa). Catalysis depends on nucleophile residues Cys-73 and Cys-76. Intrachain disulfides connect Cys-73–Cys-76 and Cys-104–Cys-113. N-linked (GlcNAc...) asparagine glycans are attached at residues Asn-133 and Asn-246. A disulfide bridge links Cys-396 with Cys-408. The ERV/ALR sulfhydryl oxidase domain occupies 399–506; the sequence is SEPHFRGFPC…EDPHFPKVQW (108 aa). FAD contacts are provided by residues Arg-404, Trp-411, His-415, Asp-454, His-458, 481-488, Lys-503, and Trp-506; that span reads WTSHNRVN. Cys-452 and Cys-455 are disulfide-bonded. The cysteines at positions 512 and 515 are disulfide-linked. The interval 581-647 is disordered; sequence GHEQAASAES…QENAPGQQHL (67 aa). Residues 628-638 show a composition bias toward basic and acidic residues; sequence ERMEDHQRDMQ. The helical transmembrane segment at 711–731 threads the bilayer; that stretch reads ISLCVGLYSVSFMGLLAMYTY.

The protein belongs to the quiescin-sulfhydryl oxidase (QSOX) family. Monomer. FAD is required as a cofactor. Post-translationally, N-glycosylated. O-glycosylated on Thr and Ser residues. As to expression, detected in skin (at protein level). Expressed in the seminal vesicles and skin.

The protein localises to the golgi apparatus membrane. Its subcellular location is the secreted. The catalysed reaction is 2 R'C(R)SH + O2 = R'C(R)S-S(R)CR' + H2O2. In terms of biological role, catalyzes the oxidation of sulfhydryl groups in peptide and protein thiols to disulfides with the reduction of oxygen to hydrogen peroxide. Plays a role in disulfide bond formation in a variety of extracellular proteins. In fibroblasts, required for normal incorporation of laminin into the extracellular matrix, and thereby for normal cell-cell adhesion and cell migration. The sequence is that of Sulfhydryl oxidase 1 (Qsox1) from Mus musculus (Mouse).